A 262-amino-acid polypeptide reads, in one-letter code: Adenosylcobinamide-GDP ribazoletransferase (262 aa).

7 consecutive transmembrane segments (helical) span residues 37-57 (SMPL…ALCS), 58-78 (MFSF…GIWL), 112-132 (VGAF…LFLY), 139-159 (IPPA…AWLL), 183-203 (AVWA…FGGV), 205-225 (VWTS…AKPW), and 237-257 (VLGA…WLLH).

Belongs to the CobS family. Mg(2+) serves as cofactor.

The protein localises to the cell membrane. It catalyses the reaction alpha-ribazole + adenosylcob(III)inamide-GDP = adenosylcob(III)alamin + GMP + H(+). The catalysed reaction is alpha-ribazole 5'-phosphate + adenosylcob(III)inamide-GDP = adenosylcob(III)alamin 5'-phosphate + GMP + H(+). It participates in cofactor biosynthesis; adenosylcobalamin biosynthesis; adenosylcobalamin from cob(II)yrinate a,c-diamide: step 7/7. Its function is as follows. Joins adenosylcobinamide-GDP and alpha-ribazole to generate adenosylcobalamin (Ado-cobalamin). Also synthesizes adenosylcobalamin 5'-phosphate from adenosylcobinamide-GDP and alpha-ribazole 5'-phosphate. This Geobacillus thermodenitrificans (strain NG80-2) protein is Adenosylcobinamide-GDP ribazoletransferase.